We begin with the raw amino-acid sequence, 65 residues long: MNKVCFVVVLVLFVALAAYVSPIEGVPTGGCPLSDSLCAKYCKSHKFGKTGRCTGPNKMKCKCLV.

An N-terminal signal peptide occupies residues 1–25 (MNKVCFVVVLVLFVALAAYVSPIEG). 3 disulfides stabilise this stretch: C31/C53, C38/C61, and C42/C63.

This sequence belongs to the short scorpion toxin superfamily. Potassium channel inhibitor family. Alpha-KTx 11 subfamily. Expressed by the venom gland.

The protein resides in the secreted. Functionally, this recombinant toxin inhibits the mammalian voltage-gated potassium channels Kv1.3/KCNA3 in vitro with an IC(50) of 26.40 nM. The sequence is that of Toxin KTx8 from Lychas mucronatus (Chinese swimming scorpion).